A 207-amino-acid chain; its full sequence is Outer-membrane lipoprotein LolB (207 aa).

A signal peptide spans 1–21 (MPLPDFRLIRLLPLAALVLTA). The N-palmitoyl cysteine moiety is linked to residue cysteine 22. Cysteine 22 carries S-diacylglycerol cysteine lipidation.

Belongs to the LolB family. In terms of assembly, monomer.

The protein resides in the cell outer membrane. Plays a critical role in the incorporation of lipoproteins in the outer membrane after they are released by the LolA protein. This chain is Outer-membrane lipoprotein LolB, found in Escherichia coli (strain SMS-3-5 / SECEC).